The primary structure comprises 640 residues: MEKQNHSNESSDGHKSSPLFSSTTFLLALGSLGVVYGDIGTSPLYSIRECFHGTHAIALNEPNIFGVLSLVFWSMTMVICVKYVVFVMRADNHGMGGIFALLALIPGDSGRISPRLHGVVAFAATLGASLLYGDGVITPAISVLSAVEGLEVATEAAKPLVVPLTCVVLLALFLVQRRGTGVIGNVFGPIMIVWFVTIAALGAGKIVDRPDILLAVNPVYAFEFFAANRFVGVVVLGSVVLCITGGEALYADMGHFGRNPIRLSWLGLAFPALLLNYFGQGALLLSDPNFAFNPFYGLVPRTLLYPMVCLSTIATVIASQAMISGVFSLTQQAIQLGFCPRMRIIHTSRETRGQVYIPEVNYLLMIACLGLVLVFKKSSGLAGAYGIAVTADMALTSILFFFVITRTWKWSLARAVPLLVLFLFFDLSYFGANLFKIFDGGWITLTIAAIVATSMITWKDGRAALARKILSSRLPENLFLEDVARHNPPRVPGTAIFMSVSPMGIPVSLLHHYKHNQVLHEQVILLSITSTDTPTVPDRKKLHIVDLGQGFYRIIASYGFMETPNIPTIMRLASMQGIVTDPARTSYYLGRESLLTGGDSKMMQWRKALFVYMSRNAGTPTAYFDIPPDRVVELGLQIAI.

Transmembrane regions (helical) follow at residues Leu19 to Ile39, Val67 to Val87, Gly118 to Thr138, Glu155 to Val175, Gly181 to Leu201, Phe230 to Tyr250, Trp265 to Leu285, Met307 to Phe327, Val355 to Phe375, Ala384 to Ile404, Ala415 to Phe435, and Ile437 to Thr457.

This sequence belongs to the HAK/KUP transporter (TC 2.A.72) family.

The protein localises to the cell inner membrane. The enzyme catalyses K(+)(in) + H(+)(in) = K(+)(out) + H(+)(out). Its function is as follows. Transport of potassium into the cell. Likely operates as a K(+):H(+) symporter. The protein is Probable potassium transport system protein Kup 2 of Syntrophobacter fumaroxidans (strain DSM 10017 / MPOB).